The chain runs to 299 residues: MPDNFREGDKQDSQKGRQGARWGQERRLEFIDYRLRWDGQINRSSLTDFFGISVPQASLDLSEYTKLAPDNLEYDMSSRVYRSTKLFQPVYMTSSLECYLNDLLQVAIQPEIHFGSFLGWRSPVAAVPRLLRRLDTDVVSQILRAIRENEAVHVIYQSMSDPQGSKRTLTPHSLVHDGYRWHTRAWCHKRGEYRDFLLSRIVQAQNAGPDEERANGDLAWNTFIKIILIAHPGLCLAQRNLIERDYAMIDGEIHLECRQALLHYLLFQLNLTETQSHQAPEALQLALKNKDEIYALLKQ.

Over residues 1 to 15 the composition is skewed to basic and acidic residues; sequence MPDNFREGDKQDSQK. A disordered region spans residues 1 to 21; the sequence is MPDNFREGDKQDSQKGRQGAR. Residues 1-95 are winged HTH domain; sequence MPDNFREGDK…LFQPVYMTSS (95 aa). A WYL domain region spans residues 96–207; that stretch reads LECYLNDLLQ…LSRIVQAQNA (112 aa). Positions 131–211 constitute a WYL domain; sequence LRRLDTDVVS…VQAQNAGPDE (81 aa). Residues 156–200 are probable ligand-binding region; it reads YQSMSDPQGSKRTLTPHSLVHDGYRWHTRAWCHKRGEYRDFLLSR. The WCX domain stretch occupies residues 208-299; that stretch reads GPDEERANGD…KDEIYALLKQ (92 aa).

As to quaternary structure, homodimer.

Transcriptional regulator of a CBASS antivirus system. CBASS (cyclic oligonucleotide-based antiphage signaling system) provides immunity against bacteriophage. The CD-NTase protein synthesizes cyclic nucleotides in response to infection; these serve as specific second messenger signals. The signals activate a diverse range of effectors, leading to bacterial cell death and thus abortive phage infection. A type III CBASS system. Expression of this CBASS system (Cap18-Cap6-Cap7-CdnC-CapW-Cap17) in a susceptible E.coli (strain MG1655) confers resistance to bacteriophage P1. Binds specifically to and represses expression from the CBASS promoter, found between the genes for divergently transcribed capW and cdnC. The protein is DNA-binding transcriptional repressor CapW of Escherichia coli (strain KTE188).